Reading from the N-terminus, the 188-residue chain is Elongation factor P-like protein (188 aa).

This sequence belongs to the elongation factor P family.

This Aliivibrio fischeri (strain MJ11) (Vibrio fischeri) protein is Elongation factor P-like protein.